Consider the following 182-residue polypeptide: ADP-ribosylation factor 1 (182 aa).

Gly2 is lipidated: N-myristoyl glycine. The segment at 3-16 (NVFANLFKGLFGKK) is important for the stable binding to the membranes. Residues 24-32 (GLDAAGKTT), 126-129 (NKQD), and Ala160 each bind GTP.

The protein belongs to the small GTPase superfamily. Arf family.

The protein localises to the golgi apparatus membrane. Its subcellular location is the cytoplasm. The protein resides in the cytosol. It carries out the reaction GTP + H2O = GDP + phosphate + H(+). Alternates between an inactive GDP-bound form and an active GTP-bound form. Activated by a guanine nucleotide-exchange factor (GEF) and inactivated by GTPase-activating protein (GAP). In terms of biological role, small GTPase involved in protein trafficking between different compartments. Modulates vesicle budding and uncoating within the Golgi complex. In its GTP-bound form, triggers the recruitment of coatomer proteins to the Golgi membrane. The hydrolysis of ARF1-bound GTP, which is mediated by ARFGAPs proteins, is required for dissociation of coat proteins from Golgi membranes and vesicles. Has a role in eye development. Required for cleavage furrow ingression in embryonic cells. The polypeptide is ADP-ribosylation factor 1 (Drosophila melanogaster (Fruit fly)).